A 396-amino-acid polypeptide reads, in one-letter code: Argininosuccinate synthase (396 aa).

9-17 lines the ATP pocket; that stretch reads AYSGGLDTS. Y85 contacts L-citrulline. Residue G115 participates in ATP binding. 3 residues coordinate L-aspartate: T117, N121, and D122. N121 contacts L-citrulline. L-citrulline is bound by residues R125, S173, E258, and Y270.

This sequence belongs to the argininosuccinate synthase family. Type 1 subfamily. In terms of assembly, homotetramer.

The protein localises to the cytoplasm. It carries out the reaction L-citrulline + L-aspartate + ATP = 2-(N(omega)-L-arginino)succinate + AMP + diphosphate + H(+). The protein operates within amino-acid biosynthesis; L-arginine biosynthesis; L-arginine from L-ornithine and carbamoyl phosphate: step 2/3. In Streptococcus agalactiae serotype III (strain NEM316), this protein is Argininosuccinate synthase.